Reading from the N-terminus, the 176-residue chain is Interleukin-7 (176 aa).

An N-terminal signal peptide occupies residues 1–25 (MFHVSFRYIFGIPPLILVLLPVASS). Cystine bridges form between Cys27-Cys165, Cys58-Cys153, and Cys71-Cys116. N-linked (GlcNAc...) asparagine glycans are attached at residues Asn94, Asn115, and Asn140. The interval 118 to 143 (SKGKGRKPPSLSEAQPTKNLEENKSS) is disordered.

This sequence belongs to the IL-7/IL-9 family. In terms of assembly, interacts with IL7R and CSF2RG.

The protein resides in the secreted. In terms of biological role, hematopoietic cytokine that plays an essential role in the development, expansion, and survival of naive and memory T-cells and B-cells thereby regulating the number of mature lymphocytes and maintaining lymphoid homeostasis. Mechanistically, exerts its biological effects through a receptor composed of IL7RA subunit and the cytokine receptor common subunit gamma/CSF2RG. Binding to the receptor leads to activation of various kinases including JAK1 or JAK3 depending on the cell type and subsequently propagation of signals through activation of several downstream signaling pathways including the PI3K/Akt/mTOR or the JAK-STAT5. This is Interleukin-7 (IL7) from Bos taurus (Bovine).